The chain runs to 187 residues: Protein GrpE (187 aa).

The segment covering 1–11 has biased composition (basic and acidic residues); that stretch reads MTDSSNEHETE. The tract at residues 1–21 is disordered; sequence MTDSSNEHETENPSLPIPDNE.

This sequence belongs to the GrpE family. In terms of assembly, homodimer.

It is found in the cytoplasm. Functionally, participates actively in the response to hyperosmotic and heat shock by preventing the aggregation of stress-denatured proteins, in association with DnaK and GrpE. It is the nucleotide exchange factor for DnaK and may function as a thermosensor. Unfolded proteins bind initially to DnaJ; upon interaction with the DnaJ-bound protein, DnaK hydrolyzes its bound ATP, resulting in the formation of a stable complex. GrpE releases ADP from DnaK; ATP binding to DnaK triggers the release of the substrate protein, thus completing the reaction cycle. Several rounds of ATP-dependent interactions between DnaJ, DnaK and GrpE are required for fully efficient folding. The protein is Protein GrpE of Chlamydia caviae (strain ATCC VR-813 / DSM 19441 / 03DC25 / GPIC) (Chlamydophila caviae).